Consider the following 241-residue polypeptide: Outer membrane protein assembly factor BamD (241 aa).

A signal peptide spans 1 to 17; it reads MKYQTLSGLLALSLLFG. Cysteine 18 carries N-palmitoyl cysteine lipidation. Cysteine 18 is lipidated: S-diacylglycerol cysteine.

This sequence belongs to the BamD family. As to quaternary structure, part of the Bam complex.

It localises to the cell outer membrane. Functionally, part of the outer membrane protein assembly complex, which is involved in assembly and insertion of beta-barrel proteins into the outer membrane. In Vibrio cholerae serotype O1 (strain ATCC 39315 / El Tor Inaba N16961), this protein is Outer membrane protein assembly factor BamD.